The chain runs to 2554 residues: Highly reducing polyketide synthase PKS6 (2554 aa).

The segment at 1-48 (MGSLSAVPATNGNHAALNGSASTNGQHVNGSTHVNGNHSLNGSAQVNG) is disordered. Residues 8-48 (PATNGNHAALNGSASTNGQHVNGSTHVNGNHSLNGSAQVNG) are compositionally biased toward polar residues. In terms of domain architecture, Ketosynthase family 3 (KS3) spans 56–481 (LEPIAVVGMS…GTNAHVVVDA (426 aa)). Residues C230, H367, and H407 each act as for beta-ketoacyl synthase activity in the active site. The segment at 595–913 (VFSGQGAQYP…HYTGSLKRGE (319 aa)) is malonyl-CoA:ACP transacylase (MAT) domain. An N-terminal hotdog fold region spans residues 981–1119 (HELLGTLVHD…GLVQVILKSE (139 aa)). A dehydratase (DH) domain region spans residues 981-1281 (HELLGTLVHD…QAWGVVATKL (301 aa)). Residues 981–1287 (HELLGTLVHD…ATKLPDVSIG (307 aa)) enclose the PKS/mFAS DH domain. The active-site Proton acceptor; for dehydratase activity is H1013. The tract at residues 1137–1287 (AQHIPANQFY…ATKLPDVSIG (151 aa)) is C-terminal hotdog fold. The Proton donor; for dehydratase activity role is filled by D1200. Residues 1451 to 1556 (VEVGAGTGSA…KTMLRPGGKL (106 aa)) form a methyltransferase (CMet) domain region. An enoyl reductase (ER) domain region spans residues 1840-2153 (GVLDTIRWVD…AGKHTGKVIL (314 aa)). The segment at 2177-2353 (ATYLVVGGLG…TAYAVNIGAI (177 aa)) is ketoreductase (KR) domain. In terms of domain architecture, Carrier spans 2457–2534 (EAQDIICDAI…ELAEIVTKGS (78 aa)). Position 2494 is an O-(pantetheine 4'-phosphoryl)serine (S2494).

The protein operates within secondary metabolite biosynthesis. Highly reducing polyketide synthase; part of the gene cluster that mediates the biosynthesis of the lipopeptide fusaristatin A. Fusaristatin A consists of a polyketide chain linked to three amino acid residues glutamine (Gln), dehydroalanine (dehydro-Ala), and beta-aminoisobutyric acid. The biosynthesis starts with formation of a linear polyketide chain by the highly reducing polyketide synthase PKS6. The gene cluster does not contain an acyl-CoA ligase or an acyl-transferase, and it is therefore predicted that the polyketide is transferred directly to the nonribosomal peptide synthetase NRPS7. Modules 1-3 from NRPS7 incorporate dehydro-Ala, Gln, and beta-aminoisobutyric acid in the compound, which is released by cyclization. The beta-aminoisobutyric acid units are most likely not freely available to the NRPS, but can be synthesized from thymine, which requires a dehydrogenase, a monooxygenase, and an aminotransferase. The fusaristatin A cluster contains a cytochrome P450 monooxygenase (FGSG_08207) and an aminotransferase (FGSG_17085), which theoretically can perform two of the enzymatic steps. The enzymes may however also be involved in biosynthesis of dehydroalanine or modification of the polyketide. The dehydro-Ala residue can be a result of cyclization, where serine is dehydrated. The last gene of the cluster encodes a protein with an A/B barrel domain found in variable enzymes, which hampers functional prediction. The protein is Highly reducing polyketide synthase PKS6 of Gibberella zeae (strain ATCC MYA-4620 / CBS 123657 / FGSC 9075 / NRRL 31084 / PH-1) (Wheat head blight fungus).